Consider the following 35-residue polypeptide: Probable L,D-transpeptidase ErfK/SrfK (35 aa).

Residues 1-21 (MRRVKLLCTALMLLASHGALA) form the signal peptide.

The protein belongs to the YkuD family.

Its subcellular location is the periplasm. It participates in cell wall biogenesis; peptidoglycan biosynthesis. This Klebsiella aerogenes (Enterobacter aerogenes) protein is Probable L,D-transpeptidase ErfK/SrfK (erfK).